The chain runs to 317 residues: Lysosomal-associated transmembrane protein 4B (317 aa).

The segment at 25 to 73 (AFGAKGTDPAEARSSRGIEEAGPRAHGRAGREPERRRSRQQRRGGLQAR) is disordered. The segment covering 32 to 59 (DPAEARSSRGIEEAGPRAHGRAGREPER) has biased composition (basic and acidic residues). Helical transmembrane passes span 117–137 (ILLG…LLSA), 163–183 (MCIA…ATYG), 191–211 (WIIP…LVAI), and 244–264 (CLVL…GYLI). Residues 205-221 (LNMLVAITVLIYPNSIQ) form a required for NEDD4 interaction region.

It belongs to the LAPTM4/LAPTM5 transporter family. As to quaternary structure, homooligomer; upon reaching the lysosomes. Interacts with MCOLN1. Interacts with NEDD4; may play a role in the lysosomal sorting of LAPTM4B; enhances HGS association with NEDD4; mediates inhibition of EGFR degradation. Interacts with PIP5K1C; promotes SNX5 association with LAPTM4B; kinase activity of PIP5K1C is required; interaction is regulated by phosphatidylinositol 4,5-bisphosphate generated by PIP5K1C. Interacts with HGS; promotes HGS ubiquitination. Interacts with SNX5. Interacts with SLC3A2 and SLC7A5; recruits SLC3A2 and SLC7A5 to lysosomes to promote leucine uptake into these organelles and is required for mTORC1 activation. Interacts with LRRC32; decreases TGFB1 production in regulatory T cells. Interacts with BECN1; competes with EGFR for LAPTM4B binding; regulates EGFR activity. Interacts with EGFR; positively correlates with EGFR activation. In terms of processing, undergoes proteolytic cleavage following delivery to the lysosomes. Ubiquitinated by NEDD4.

It is found in the endomembrane system. The protein resides in the late endosome membrane. It localises to the cell membrane. Its subcellular location is the cell projection. The protein localises to the lysosome membrane. It is found in the endosome membrane. The protein resides in the endosome. It localises to the multivesicular body membrane. Its subcellular location is the multivesicular body lumen. Required for optimal lysosomal function. Blocks EGF-stimulated EGFR intraluminal sorting and degradation. Conversely by binding with the phosphatidylinositol 4,5-bisphosphate, regulates its PIP5K1C interaction, inhibits HGS ubiquitination and relieves LAPTM4B inhibition of EGFR degradation. Recruits SLC3A2 and SLC7A5 (the Leu transporter) to the lysosome, promoting entry of leucine and other essential amino acid (EAA) into the lysosome, stimulating activation of proton-transporting vacuolar (V)-ATPase protein pump (V-ATPase) and hence mTORC1 activation. Plays a role as negative regulator of TGFB1 production in regulatory T cells. Binds ceramide and facilitates its exit from late endosome in order to control cell death pathways. This chain is Lysosomal-associated transmembrane protein 4B, found in Homo sapiens (Human).